The sequence spans 339 residues: 5-dehydro-2-deoxygluconokinase (339 aa).

This sequence belongs to the carbohydrate kinase PfkB family.

The catalysed reaction is 5-dehydro-2-deoxy-D-gluconate + ATP = 6-phospho-5-dehydro-2-deoxy-D-gluconate + ADP + H(+). Its pathway is polyol metabolism; myo-inositol degradation into acetyl-CoA; acetyl-CoA from myo-inositol: step 5/7. Catalyzes the phosphorylation of 5-dehydro-2-deoxy-D-gluconate (2-deoxy-5-keto-D-gluconate or DKG) to 6-phospho-5-dehydro-2-deoxy-D-gluconate (DKGP). The sequence is that of 5-dehydro-2-deoxygluconokinase from Clostridium beijerinckii (strain ATCC 51743 / NCIMB 8052) (Clostridium acetobutylicum).